Reading from the N-terminus, the 374-residue chain is 3-dehydroquinate synthase (374 aa).

This sequence belongs to the archaeal-type DHQ synthase family.

It catalyses the reaction 2-amino-2,3,7-trideoxy-D-lyxo-hept-6-ulosonate + NAD(+) + H2O = 3-dehydroquinate + NH4(+) + NADH + H(+). Its function is as follows. Catalyzes the oxidative deamination and cyclization of 2-amino-3,7-dideoxy-D-threo-hept-6-ulosonic acid (ADH) to yield 3-dehydroquinate (DHQ), which is fed into the canonical shikimic pathway of aromatic amino acid biosynthesis. The polypeptide is 3-dehydroquinate synthase (Methanothermobacter thermautotrophicus (strain ATCC 29096 / DSM 1053 / JCM 10044 / NBRC 100330 / Delta H) (Methanobacterium thermoautotrophicum)).